The following is a 38-amino-acid chain: Toxin Bot33 (38 aa).

Cystine bridges form between cysteine 8–cysteine 28, cysteine 14–cysteine 33, and cysteine 18–cysteine 35.

Belongs to the short scorpion toxin superfamily. Potassium channel inhibitor family. Expressed by the venom gland.

It is found in the secreted. A probable toxin that has no activity on the tested mammalian voltage-gated potassium channels (when tested at 1 uM) and is not toxic to mice. It resembles alpha toxins that block voltage-gated potassium channels. This is Toxin Bot33 from Buthus occitanus tunetanus (Common European scorpion).